The primary structure comprises 265 residues: Glutamate racemase (265 aa).

Substrate is bound by residues 9–10 (DS) and 41–42 (YG). Catalysis depends on cysteine 73, which acts as the Proton donor/acceptor. 74–75 (NT) contacts substrate. The Proton donor/acceptor role is filled by cysteine 180. 181–182 (TH) is a substrate binding site.

This sequence belongs to the aspartate/glutamate racemases family.

It catalyses the reaction L-glutamate = D-glutamate. The protein operates within cell wall biogenesis; peptidoglycan biosynthesis. Provides the (R)-glutamate required for cell wall biosynthesis. The protein is Glutamate racemase of Aliivibrio salmonicida (strain LFI1238) (Vibrio salmonicida (strain LFI1238)).